The primary structure comprises 343 residues: Protease HtpX homolog (343 aa).

A run of 2 helical transmembrane segments spans residues 7 to 24 (TMLL…GYLV) and 29 to 46 (GMVV…FSYW). His130 is a binding site for Zn(2+). Residue Glu131 is part of the active site. Residue His134 coordinates Zn(2+). A run of 2 helical transmembrane segments spans residues 145 to 165 (LTAT…LMGM) and 177 to 197 (GAGM…AMLV). Glu206 is a binding site for Zn(2+). The disordered stretch occupies residues 308-343 (NLEDEDLNPEAQNGFTHNQKKKTVRRGKDRPTWLRH). Residues 325–335 (NQKKKTVRRGK) show a composition bias toward basic residues.

It belongs to the peptidase M48B family. The cofactor is Zn(2+).

It is found in the cell inner membrane. The sequence is that of Protease HtpX homolog from Bartonella bacilliformis (strain ATCC 35685 / KC583 / Herrer 020/F12,63).